The sequence spans 520 residues: GMP synthase [glutamine-hydrolyzing] (520 aa).

In terms of domain architecture, Glutamine amidotransferase type-1 spans 9–202 (KILILDFGSQ…VRKICGCSGK (194 aa)). The active-site Nucleophile is the Cys86. Residues His176 and Glu178 contribute to the active site. The 193-residue stretch at 203–395 (WTPGQIIEDA…LGLPHQMVWR (193 aa)) folds into the GMPS ATP-PPase domain. 230–236 (SGGVDSS) is a binding site for ATP.

As to quaternary structure, homodimer.

It carries out the reaction XMP + L-glutamine + ATP + H2O = GMP + L-glutamate + AMP + diphosphate + 2 H(+). The protein operates within purine metabolism; GMP biosynthesis; GMP from XMP (L-Gln route): step 1/1. Catalyzes the synthesis of GMP from XMP. The polypeptide is GMP synthase [glutamine-hydrolyzing] (Geotalea daltonii (strain DSM 22248 / JCM 15807 / FRC-32) (Geobacter daltonii)).